A 284-amino-acid chain; its full sequence is NH(3)-dependent NAD(+) synthetase (284 aa).

ATP is bound at residue 51-58 (GISGGIDS). Residue Asp-57 coordinates Mg(2+). Deamido-NAD(+) is bound at residue Arg-148. Residue Thr-168 participates in ATP binding. A Mg(2+)-binding site is contributed by Glu-173. Positions 181 and 188 each coordinate deamido-NAD(+). ATP is bound by residues Lys-197 and Thr-219. Position 268-269 (268-269 (HK)) interacts with deamido-NAD(+).

It belongs to the NAD synthetase family. As to quaternary structure, homodimer.

It catalyses the reaction deamido-NAD(+) + NH4(+) + ATP = AMP + diphosphate + NAD(+) + H(+). It participates in cofactor biosynthesis; NAD(+) biosynthesis; NAD(+) from deamido-NAD(+) (ammonia route): step 1/1. Its function is as follows. Catalyzes the ATP-dependent amidation of deamido-NAD to form NAD. Uses ammonia as a nitrogen source. The protein is NH(3)-dependent NAD(+) synthetase of Burkholderia mallei (strain NCTC 10247).